A 175-amino-acid chain; its full sequence is Ribosome maturation factor RimM (175 aa).

Residues 95 to 175 (SEDEFYWREL…RIEVDWDPGF (81 aa)) form the PRC barrel domain.

Belongs to the RimM family. As to quaternary structure, binds ribosomal protein uS19.

It is found in the cytoplasm. Its function is as follows. An accessory protein needed during the final step in the assembly of 30S ribosomal subunit, possibly for assembly of the head region. Essential for efficient processing of 16S rRNA. May be needed both before and after RbfA during the maturation of 16S rRNA. It has affinity for free ribosomal 30S subunits but not for 70S ribosomes. The sequence is that of Ribosome maturation factor RimM from Aliivibrio fischeri (strain MJ11) (Vibrio fischeri).